Reading from the N-terminus, the 330-residue chain is Aspartate--ammonia ligase (330 aa).

This sequence belongs to the class-II aminoacyl-tRNA synthetase family. AsnA subfamily.

The protein localises to the cytoplasm. The enzyme catalyses L-aspartate + NH4(+) + ATP = L-asparagine + AMP + diphosphate + H(+). The protein operates within amino-acid biosynthesis; L-asparagine biosynthesis; L-asparagine from L-aspartate (ammonia route): step 1/1. The chain is Aspartate--ammonia ligase from Escherichia coli O17:K52:H18 (strain UMN026 / ExPEC).